The chain runs to 360 residues: MSKQILILPGDGIGPEIMTEAVKVLELANEKYQLGFELTHDVIGGAAIDKHGVPLADETLERARAADAVLLGAVGGPKWDTIERDIRPERGLLKIRSQLGLFGNLRPAILYPQLADASSLKPEIVAGLDIMIVRELTGGIYFGAPRGTRVLDNGERQAYDTLPYSESEIRRIAKVGFDMAMVRGKKLCSVDKANVLASSQLWREIVEQVARDYPEVELSHMYVDNAAMQLVRAPKQFDVIVTDNLFGDILSDQASMLTGSIGMLPSASLDTANKGMYEPCHGSAPDIAGKGIANPLATILSVSMMLRYSFNLTDAADAIEKAVSLVLDQGIRTGDIWSEGKVKVGTQEMGDAVVAALRNL.

76–89 (GPKWDTIERDIRPE) is a binding site for NAD(+). 4 residues coordinate substrate: R96, R106, R134, and D224. Mg(2+) contacts are provided by D224, D248, and D252. NAD(+) is bound at residue 282–294 (GSAPDIAGKGIAN).

It belongs to the isocitrate and isopropylmalate dehydrogenases family. LeuB type 1 subfamily. As to quaternary structure, homodimer. Mg(2+) is required as a cofactor. The cofactor is Mn(2+).

It localises to the cytoplasm. It carries out the reaction (2R,3S)-3-isopropylmalate + NAD(+) = 4-methyl-2-oxopentanoate + CO2 + NADH. Its pathway is amino-acid biosynthesis; L-leucine biosynthesis; L-leucine from 3-methyl-2-oxobutanoate: step 3/4. Catalyzes the oxidation of 3-carboxy-2-hydroxy-4-methylpentanoate (3-isopropylmalate) to 3-carboxy-4-methyl-2-oxopentanoate. The product decarboxylates to 4-methyl-2 oxopentanoate. This chain is 3-isopropylmalate dehydrogenase, found in Pseudomonas syringae pv. syringae (strain B728a).